The primary structure comprises 152 residues: D-aminoacyl-tRNA deacylase (152 aa).

The Gly-cisPro motif, important for rejection of L-amino acids signature appears at 142–143 (GP).

Belongs to the DTD family. Homodimer.

The protein localises to the cytoplasm. It catalyses the reaction glycyl-tRNA(Ala) + H2O = tRNA(Ala) + glycine + H(+). The enzyme catalyses a D-aminoacyl-tRNA + H2O = a tRNA + a D-alpha-amino acid + H(+). In terms of biological role, an aminoacyl-tRNA editing enzyme that deacylates mischarged D-aminoacyl-tRNAs. Also deacylates mischarged glycyl-tRNA(Ala), protecting cells against glycine mischarging by AlaRS. Acts via tRNA-based rather than protein-based catalysis; rejects L-amino acids rather than detecting D-amino acids in the active site. By recycling D-aminoacyl-tRNA to D-amino acids and free tRNA molecules, this enzyme counteracts the toxicity associated with the formation of D-aminoacyl-tRNA entities in vivo and helps enforce protein L-homochirality. This chain is D-aminoacyl-tRNA deacylase, found in Burkholderia ambifaria (strain ATCC BAA-244 / DSM 16087 / CCUG 44356 / LMG 19182 / AMMD) (Burkholderia cepacia (strain AMMD)).